The sequence spans 238 residues: Ribosomal RNA small subunit methyltransferase G (238 aa).

Residues Gly-77, Phe-82, 128-129, and Arg-147 each bind S-adenosyl-L-methionine; that span reads AE. The disordered stretch occupies residues 219-238; that stretch reads RQTPKKYPRKAGLPNKEPIE.

The protein belongs to the methyltransferase superfamily. RNA methyltransferase RsmG family.

It is found in the cytoplasm. In terms of biological role, specifically methylates the N7 position of guanine in position 535 of 16S rRNA. The sequence is that of Ribosomal RNA small subunit methyltransferase G from Oceanobacillus iheyensis (strain DSM 14371 / CIP 107618 / JCM 11309 / KCTC 3954 / HTE831).